The sequence spans 335 residues: Cytoplasmic envelopment protein 2 (335 aa).

The protein belongs to the herpesviridae cytoplasmic envelopment protein 2 family. In terms of assembly, interacts with cytoplasmic envelopment protein 3 and with the capsid.

It localises to the virion tegument. Its subcellular location is the host cytoplasm. It is found in the host nucleus. Functionally, plays a critical role in cytoplasmic virus egress. Participates in the final step of tegumentation and envelope acquisition within the host cytoplasm by directly interacting with the capsid. Upon virion binding to target cell, a signaling cascade is triggered to disrupt the interaction with the capsid, thereby preparing capsid uncoating. In Human herpesvirus 6A (strain Uganda-1102) (HHV-6 variant A), this protein is Cytoplasmic envelopment protein 2 (U65).